A 62-amino-acid polypeptide reads, in one-letter code: Large ribosomal subunit protein uL30 (62 aa).

The protein belongs to the universal ribosomal protein uL30 family. As to quaternary structure, part of the 50S ribosomal subunit.

This Polynucleobacter asymbioticus (strain DSM 18221 / CIP 109841 / QLW-P1DMWA-1) (Polynucleobacter necessarius subsp. asymbioticus) protein is Large ribosomal subunit protein uL30.